A 613-amino-acid polypeptide reads, in one-letter code: MLVFKSTMECSISSTIHVLGSCKTSDDVNQIHGRLIKTGIIKNSNLTTRIVLAFASSRRPYLADFARCVFHEYHVCSFSFGEVEDPFLWNAVIKSHSHGKDPRQALLLLCLMLENGVSVDKFSLSLVLKACSRLGFVKGGMQIHGFLKKTGLWSDLFLQNCLIGLYLKCGCLGLSRQMFDRMPKRDSVSYNSMIDGYVKCGLIVSARELFDLMPMEMKNLISWNSMISGYAQTSDGVDIASKLFADMPEKDLISWNSMIDGYVKHGRIEDAKGLFDVMPRRDVVTWATMIDGYAKLGFVHHAKTLFDQMPHRDVVAYNSMMAGYVQNKYHMEALEIFSDMEKESHLLPDDTTLVIVLPAIAQLGRLSKAIDMHLYIVEKQFYLGGKLGVALIDMYSKCGSIQHAMLVFEGIENKSIDHWNAMIGGLAIHGLGESAFDMLLQIERLSLKPDDITFVGVLNACSHSGLVKEGLLCFELMRRKHKIEPRLQHYGCMVDILSRSGSIELAKNLIEEMPVEPNDVIWRTFLTACSHHKEFETGELVAKHLILQAGYNPSSYVLLSNMYASFGMWKDVRRVRTMMKERKIEKIPGCSWIELDGRVHEFFVDSIEVSSTL.

PPR repeat units lie at residues 85–119, 120–154, 155–185, 186–216, 219–250, 251–285, 286–312, 313–347, 349–383, 384–414, 415–449, 450–480, and 486–516; these read DPFL…GVSV, DKFS…GLWS, DLFL…MPKR, DSVS…MPME, NLIS…MPEK, DLIS…DVVT, WATM…MPHR, DVVA…SHLL, DDTT…QFYL, GGKL…IENK, SIDH…SLKP, DDIT…MRRK, and RLQH…MPVE. The tract at residues 521 to 596 is type E motif; that stretch reads IWRTFLTACS…IPGCSWIELD (76 aa).

It belongs to the PPR family. PCMP-E subfamily. Interacts with DYW1.

The protein localises to the plastid. The protein resides in the chloroplast. Its function is as follows. Plays a major role in chloroplast RNA editing. Acts as a site-recognition transacting factor to recruit C-deaminase. Involved in single RNA editing events. Required for the edition of the site 1 of ndhD (ndhD-1 site corresponding to cytidine-2), which is a plastid-encoded subunit of the NADH-plastoquinone oxidoreductase. The interaction with DYW1 is required for its function in editing the ndhD-1 site. This is Pentatricopeptide repeat-containing protein At2g45350, chloroplastic (CRR4) from Arabidopsis thaliana (Mouse-ear cress).